The following is a 66-amino-acid chain: Large ribosomal subunit protein bL33c (66 aa).

It belongs to the bacterial ribosomal protein bL33 family.

The protein resides in the plastid. It is found in the chloroplast. This chain is Large ribosomal subunit protein bL33c, found in Gossypium barbadense (Sea Island cotton).